A 149-amino-acid chain; its full sequence is Lipoprotein signal peptidase (149 aa).

The next 2 helical transmembrane spans lie at 53-73 (MPGK…ALVI) and 89-109 (GLIA…GFVI). Catalysis depends on residues aspartate 110 and aspartate 124. A helical transmembrane segment spans residues 119 to 139 (VFNLADSAIVCGGILLLILVL).

Belongs to the peptidase A8 family.

The protein resides in the cell membrane. The enzyme catalyses Release of signal peptides from bacterial membrane prolipoproteins. Hydrolyzes -Xaa-Yaa-Zaa-|-(S,diacylglyceryl)Cys-, in which Xaa is hydrophobic (preferably Leu), and Yaa (Ala or Ser) and Zaa (Gly or Ala) have small, neutral side chains.. Its pathway is protein modification; lipoprotein biosynthesis (signal peptide cleavage). Functionally, this protein specifically catalyzes the removal of signal peptides from prolipoproteins. This chain is Lipoprotein signal peptidase, found in Syntrophomonas wolfei subsp. wolfei (strain DSM 2245B / Goettingen).